Reading from the N-terminus, the 148-residue chain is Calcium-regulated heat stable protein 1 (148 aa).

The span at 1–12 (MSSEPPPPPLQP) shows a compositional bias: pro residues. The segment at 1–47 (MSSEPPPPPLQPPTHQTSVGLLDTPRTRDRSPSPLRGNVVPSPLPTR) is disordered. Serine 2 carries the N-acetylserine modification. Phosphoserine occurs at positions 31, 33, and 42. Threonine 46 carries the phosphothreonine modification. Residues serine 53 and serine 59 each carry the phosphoserine modification. Residues 63–130 (VYKGVCKCFC…KLQAVEVVIT (68 aa)) form the CSD domain. Serine 147 bears the Phosphoserine mark.

As to quaternary structure, homodimer. Interacts with STYX. In terms of processing, can be phosphorylated by DYRK2 (in vitro). Dephosphorylated by calcineurin in a Ca(2+) dependent manner.

The protein localises to the cytoplasm. It is found in the P-body. It localises to the cytoplasmic granule. In terms of biological role, binds mRNA and regulates the stability of target mRNA. This Mus musculus (Mouse) protein is Calcium-regulated heat stable protein 1 (Carhsp1).